Here is a 337-residue protein sequence, read N- to C-terminus: Anthranilate phosphoribosyltransferase (337 aa).

Residues Gly-79, 82–83 (GD), Thr-87, 89–92 (NVST), 107–115 (KHGNRSVSS), and Ser-119 each bind 5-phospho-alpha-D-ribose 1-diphosphate. Gly-79 is a binding site for anthranilate. Mg(2+) is bound at residue Ser-91. Residue Asn-110 participates in anthranilate binding. Position 165 (Arg-165) interacts with anthranilate. The Mg(2+) site is built by Asp-223 and Glu-224.

The protein belongs to the anthranilate phosphoribosyltransferase family. As to quaternary structure, homodimer. It depends on Mg(2+) as a cofactor.

The catalysed reaction is N-(5-phospho-beta-D-ribosyl)anthranilate + diphosphate = 5-phospho-alpha-D-ribose 1-diphosphate + anthranilate. It participates in amino-acid biosynthesis; L-tryptophan biosynthesis; L-tryptophan from chorismate: step 2/5. In terms of biological role, catalyzes the transfer of the phosphoribosyl group of 5-phosphorylribose-1-pyrophosphate (PRPP) to anthranilate to yield N-(5'-phosphoribosyl)-anthranilate (PRA). The protein is Anthranilate phosphoribosyltransferase of Aeromonas salmonicida (strain A449).